A 271-amino-acid polypeptide reads, in one-letter code: Pyrroline-5-carboxylate reductase (271 aa).

It belongs to the pyrroline-5-carboxylate reductase family.

It is found in the cytoplasm. It carries out the reaction L-proline + NADP(+) = (S)-1-pyrroline-5-carboxylate + NADPH + 2 H(+). The catalysed reaction is L-proline + NAD(+) = (S)-1-pyrroline-5-carboxylate + NADH + 2 H(+). The protein operates within amino-acid biosynthesis; L-proline biosynthesis; L-proline from L-glutamate 5-semialdehyde: step 1/1. Catalyzes the reduction of 1-pyrroline-5-carboxylate (PCA) to L-proline. In Staphylococcus aureus (strain Mu50 / ATCC 700699), this protein is Pyrroline-5-carboxylate reductase.